We begin with the raw amino-acid sequence, 462 residues long: Cysteine--tRNA ligase (462 aa).

Cysteine 28 is a binding site for Zn(2+). A 'HIGH' region motif is present at residues 30 to 40 (VTAYDLCHIGH). Zn(2+) contacts are provided by cysteine 209, histidine 234, and glutamate 238. The short motif at 266–270 (KMSKS) is the 'KMSKS' region element. Lysine 269 lines the ATP pocket.

Belongs to the class-I aminoacyl-tRNA synthetase family. As to quaternary structure, monomer. Zn(2+) is required as a cofactor.

Its subcellular location is the cytoplasm. It carries out the reaction tRNA(Cys) + L-cysteine + ATP = L-cysteinyl-tRNA(Cys) + AMP + diphosphate. This is Cysteine--tRNA ligase from Baumannia cicadellinicola subsp. Homalodisca coagulata.